We begin with the raw amino-acid sequence, 230 residues long: Thymidylate kinase (230 aa).

20–27 (GGEGAGKS) is an ATP binding site.

Belongs to the thymidylate kinase family.

The catalysed reaction is dTMP + ATP = dTDP + ADP. In terms of biological role, phosphorylation of dTMP to form dTDP in both de novo and salvage pathways of dTTP synthesis. This is Thymidylate kinase from Rhodopseudomonas palustris (strain ATCC BAA-98 / CGA009).